Here is a 1357-residue protein sequence, read N- to C-terminus: DNA-directed RNA polymerase subunit beta (1357 aa).

This sequence belongs to the RNA polymerase beta chain family. The RNAP catalytic core consists of 2 alpha, 1 beta, 1 beta' and 1 omega subunit. When a sigma factor is associated with the core the holoenzyme is formed, which can initiate transcription.

It catalyses the reaction RNA(n) + a ribonucleoside 5'-triphosphate = RNA(n+1) + diphosphate. Functionally, DNA-dependent RNA polymerase catalyzes the transcription of DNA into RNA using the four ribonucleoside triphosphates as substrates. In Pseudomonas putida (Arthrobacter siderocapsulatus), this protein is DNA-directed RNA polymerase subunit beta.